We begin with the raw amino-acid sequence, 562 residues long: Formate--tetrahydrofolate ligase (562 aa).

Residue 71–78 (TPAGEGKS) coordinates ATP.

Belongs to the formate--tetrahydrofolate ligase family.

It catalyses the reaction (6S)-5,6,7,8-tetrahydrofolate + formate + ATP = (6R)-10-formyltetrahydrofolate + ADP + phosphate. It participates in one-carbon metabolism; tetrahydrofolate interconversion. In Bacillus anthracis (strain A0248), this protein is Formate--tetrahydrofolate ligase.